The primary structure comprises 838 residues: Protein translocase subunit SecA (838 aa).

Residues glutamine 87, 105 to 109 (GEGKT), and aspartate 494 contribute to the ATP site. Composition is skewed to basic and acidic residues over residues 781 to 790 (EQEFQHKDET) and 803 to 819 (EDAK…KVGR). Residues 781 to 838 (EQEFQHKDETANVQYSGPAESAEDAKKEPKRREAPKVGRNDPCPCGSGKKYKKCHGAK) are disordered. Residues cysteine 823, cysteine 825, cysteine 834, and histidine 835 each contribute to the Zn(2+) site. Residues 829 to 838 (KKYKKCHGAK) are compositionally biased toward basic residues.

It belongs to the SecA family. In terms of assembly, monomer and homodimer. Part of the essential Sec protein translocation apparatus which comprises SecA, SecYEG and auxiliary proteins SecDF-YajC and YidC. It depends on Zn(2+) as a cofactor.

It localises to the cell inner membrane. The protein resides in the cytoplasm. It carries out the reaction ATP + H2O + cellular proteinSide 1 = ADP + phosphate + cellular proteinSide 2.. Its function is as follows. Part of the Sec protein translocase complex. Interacts with the SecYEG preprotein conducting channel. Has a central role in coupling the hydrolysis of ATP to the transfer of proteins into and across the cell membrane, serving as an ATP-driven molecular motor driving the stepwise translocation of polypeptide chains across the membrane. This Solidesulfovibrio magneticus (strain ATCC 700980 / DSM 13731 / RS-1) (Desulfovibrio magneticus) protein is Protein translocase subunit SecA.